We begin with the raw amino-acid sequence, 208 residues long: Ribonuclease HII (208 aa).

Residues 12–201 (ELVAGVDEVG…VRALLEPVAV (190 aa)) form the RNase H type-2 domain. A divalent metal cation is bound by residues D18, E19, and D110.

It belongs to the RNase HII family. Mn(2+) is required as a cofactor. Requires Mg(2+) as cofactor.

Its subcellular location is the cytoplasm. It carries out the reaction Endonucleolytic cleavage to 5'-phosphomonoester.. Its function is as follows. Endonuclease that specifically degrades the RNA of RNA-DNA hybrids. This Ectopseudomonas mendocina (strain ymp) (Pseudomonas mendocina) protein is Ribonuclease HII.